The primary structure comprises 658 residues: UvrABC system protein B (658 aa).

The Helicase ATP-binding domain occupies 26–413 (EGINSGKKKQ…SPEVIEQIIR (388 aa)). 39-46 (GATGTGKT) lines the ATP pocket. Residues 92–115 (YYDYYQPEAYVPQTDTFIEKDAQI) carry the Beta-hairpin motif. The 167-residue stretch at 430 to 596 (QIDDLLGEIQ…TIQKGVRDVI (167 aa)) folds into the Helicase C-terminal domain. The UVR domain maps to 622–657 (EKTIAKMEAEMKEAAKALDFERAAELRDLLLELKAE).

Belongs to the UvrB family. In terms of assembly, forms a heterotetramer with UvrA during the search for lesions. Interacts with UvrC in an incision complex.

The protein localises to the cytoplasm. The UvrABC repair system catalyzes the recognition and processing of DNA lesions. A damage recognition complex composed of 2 UvrA and 2 UvrB subunits scans DNA for abnormalities. Upon binding of the UvrA(2)B(2) complex to a putative damaged site, the DNA wraps around one UvrB monomer. DNA wrap is dependent on ATP binding by UvrB and probably causes local melting of the DNA helix, facilitating insertion of UvrB beta-hairpin between the DNA strands. Then UvrB probes one DNA strand for the presence of a lesion. If a lesion is found the UvrA subunits dissociate and the UvrB-DNA preincision complex is formed. This complex is subsequently bound by UvrC and the second UvrB is released. If no lesion is found, the DNA wraps around the other UvrB subunit that will check the other stand for damage. The chain is UvrABC system protein B from Bacillus cereus (strain ATCC 14579 / DSM 31 / CCUG 7414 / JCM 2152 / NBRC 15305 / NCIMB 9373 / NCTC 2599 / NRRL B-3711).